Here is a 246-residue protein sequence, read N- to C-terminus: Adenosine 5'-phosphosulfate reductase (246 aa).

Residues Cys131, Cys132, Cys214, and Cys217 each contribute to the [4Fe-4S] cluster site. Cys242 serves as the catalytic Nucleophile; cysteine thiosulfonate intermediate.

Belongs to the PAPS reductase family. CysH subfamily. [4Fe-4S] cluster serves as cofactor.

Its subcellular location is the cytoplasm. The enzyme catalyses [thioredoxin]-disulfide + sulfite + AMP + 2 H(+) = adenosine 5'-phosphosulfate + [thioredoxin]-dithiol. Its pathway is sulfur metabolism; hydrogen sulfide biosynthesis; sulfite from sulfate. In terms of biological role, catalyzes the formation of sulfite from adenosine 5'-phosphosulfate (APS) using thioredoxin as an electron donor. This chain is Adenosine 5'-phosphosulfate reductase, found in Neisseria meningitidis serogroup B (strain ATCC BAA-335 / MC58).